A 98-amino-acid polypeptide reads, in one-letter code: NADH-ubiquinone oxidoreductase chain 4L (98 aa).

A run of 3 helical transmembrane segments spans residues Met1–Ile21, Ser29–Leu49, and Ile61–Ile81.

This sequence belongs to the complex I subunit 4L family. Core subunit of respiratory chain NADH dehydrogenase (Complex I) which is composed of 45 different subunits.

The protein localises to the mitochondrion inner membrane. It catalyses the reaction a ubiquinone + NADH + 5 H(+)(in) = a ubiquinol + NAD(+) + 4 H(+)(out). In terms of biological role, core subunit of the mitochondrial membrane respiratory chain NADH dehydrogenase (Complex I) which catalyzes electron transfer from NADH through the respiratory chain, using ubiquinone as an electron acceptor. Part of the enzyme membrane arm which is embedded in the lipid bilayer and involved in proton translocation. The chain is NADH-ubiquinone oxidoreductase chain 4L (MT-ND4L) from Aotus trivirgatus (Three-striped night monkey).